Here is a 428-residue protein sequence, read N- to C-terminus: Serine--tRNA ligase (428 aa).

L-serine is bound at residue 235 to 237 (TAE). An ATP-binding site is contributed by 266 to 268 (RYE). Glu-289 contributes to the L-serine binding site. An ATP-binding site is contributed by 353–356 (EVSS). Position 389 (Ser-389) interacts with L-serine.

This sequence belongs to the class-II aminoacyl-tRNA synthetase family. Type-1 seryl-tRNA synthetase subfamily. Homodimer. The tRNA molecule binds across the dimer.

It localises to the cytoplasm. It carries out the reaction tRNA(Ser) + L-serine + ATP = L-seryl-tRNA(Ser) + AMP + diphosphate + H(+). The catalysed reaction is tRNA(Sec) + L-serine + ATP = L-seryl-tRNA(Sec) + AMP + diphosphate + H(+). It functions in the pathway aminoacyl-tRNA biosynthesis; selenocysteinyl-tRNA(Sec) biosynthesis; L-seryl-tRNA(Sec) from L-serine and tRNA(Sec): step 1/1. In terms of biological role, catalyzes the attachment of serine to tRNA(Ser). Is also able to aminoacylate tRNA(Sec) with serine, to form the misacylated tRNA L-seryl-tRNA(Sec), which will be further converted into selenocysteinyl-tRNA(Sec). The sequence is that of Serine--tRNA ligase from Blochmanniella pennsylvanica (strain BPEN).